The primary structure comprises 194 residues: Large ribosomal subunit protein bL25 (194 aa).

It belongs to the bacterial ribosomal protein bL25 family. CTC subfamily. Part of the 50S ribosomal subunit; part of the 5S rRNA/L5/L18/L25 subcomplex. Contacts the 5S rRNA. Binds to the 5S rRNA independently of L5 and L18.

Its function is as follows. This is one of the proteins that binds to the 5S RNA in the ribosome where it forms part of the central protuberance. The sequence is that of Large ribosomal subunit protein bL25 from Parabacteroides distasonis (strain ATCC 8503 / DSM 20701 / CIP 104284 / JCM 5825 / NCTC 11152).